A 328-amino-acid polypeptide reads, in one-letter code: Phosphate acyltransferase (328 aa).

It belongs to the PlsX family. Homodimer. Probably interacts with PlsY.

It localises to the cytoplasm. The enzyme catalyses a fatty acyl-[ACP] + phosphate = an acyl phosphate + holo-[ACP]. It functions in the pathway lipid metabolism; phospholipid metabolism. Its function is as follows. Catalyzes the reversible formation of acyl-phosphate (acyl-PO(4)) from acyl-[acyl-carrier-protein] (acyl-ACP). This enzyme utilizes acyl-ACP as fatty acyl donor, but not acyl-CoA. The sequence is that of Phosphate acyltransferase from Campylobacter jejuni subsp. jejuni serotype O:2 (strain ATCC 700819 / NCTC 11168).